The primary structure comprises 155 residues: Ribosome maturation factor RimP (155 aa).

The protein belongs to the RimP family.

Its subcellular location is the cytoplasm. In terms of biological role, required for maturation of 30S ribosomal subunits. This is Ribosome maturation factor RimP from Listeria monocytogenes serovar 1/2a (strain ATCC BAA-679 / EGD-e).